The following is a 571-amino-acid chain: Proline--tRNA ligase (571 aa).

Belongs to the class-II aminoacyl-tRNA synthetase family. ProS type 1 subfamily. As to quaternary structure, homodimer.

The protein localises to the cytoplasm. It catalyses the reaction tRNA(Pro) + L-proline + ATP = L-prolyl-tRNA(Pro) + AMP + diphosphate. Catalyzes the attachment of proline to tRNA(Pro) in a two-step reaction: proline is first activated by ATP to form Pro-AMP and then transferred to the acceptor end of tRNA(Pro). As ProRS can inadvertently accommodate and process non-cognate amino acids such as alanine and cysteine, to avoid such errors it has two additional distinct editing activities against alanine. One activity is designated as 'pretransfer' editing and involves the tRNA(Pro)-independent hydrolysis of activated Ala-AMP. The other activity is designated 'posttransfer' editing and involves deacylation of mischarged Ala-tRNA(Pro). The misacylated Cys-tRNA(Pro) is not edited by ProRS. This chain is Proline--tRNA ligase, found in Pseudomonas putida (strain GB-1).